Consider the following 167-residue polypeptide: Crossover junction endodeoxyribonuclease RuvC (167 aa).

Catalysis depends on residues Asp-11, Glu-71, and Asp-143. Mg(2+) contacts are provided by Asp-11, Glu-71, and Asp-143.

It belongs to the RuvC family. In terms of assembly, homodimer which binds Holliday junction (HJ) DNA. The HJ becomes 2-fold symmetrical on binding to RuvC with unstacked arms; it has a different conformation from HJ DNA in complex with RuvA. In the full resolvosome a probable DNA-RuvA(4)-RuvB(12)-RuvC(2) complex forms which resolves the HJ. It depends on Mg(2+) as a cofactor.

It localises to the cytoplasm. It catalyses the reaction Endonucleolytic cleavage at a junction such as a reciprocal single-stranded crossover between two homologous DNA duplexes (Holliday junction).. Its function is as follows. The RuvA-RuvB-RuvC complex processes Holliday junction (HJ) DNA during genetic recombination and DNA repair. Endonuclease that resolves HJ intermediates. Cleaves cruciform DNA by making single-stranded nicks across the HJ at symmetrical positions within the homologous arms, yielding a 5'-phosphate and a 3'-hydroxyl group; requires a central core of homology in the junction. The consensus cleavage sequence is 5'-(A/T)TT(C/G)-3'. Cleavage occurs on the 3'-side of the TT dinucleotide at the point of strand exchange. HJ branch migration catalyzed by RuvA-RuvB allows RuvC to scan DNA until it finds its consensus sequence, where it cleaves and resolves the cruciform DNA. The chain is Crossover junction endodeoxyribonuclease RuvC from Bartonella bacilliformis (strain ATCC 35685 / KC583 / Herrer 020/F12,63).